The chain runs to 318 residues: Methionyl-tRNA formyltransferase (318 aa).

Position 110–113 (110–113) interacts with (6S)-5,6,7,8-tetrahydrofolate; sequence SLLP.

It belongs to the Fmt family.

It catalyses the reaction L-methionyl-tRNA(fMet) + (6R)-10-formyltetrahydrofolate = N-formyl-L-methionyl-tRNA(fMet) + (6S)-5,6,7,8-tetrahydrofolate + H(+). In terms of biological role, attaches a formyl group to the free amino group of methionyl-tRNA(fMet). The formyl group appears to play a dual role in the initiator identity of N-formylmethionyl-tRNA by promoting its recognition by IF2 and preventing the misappropriation of this tRNA by the elongation apparatus. The chain is Methionyl-tRNA formyltransferase from Lacticaseibacillus casei (strain BL23) (Lactobacillus casei).